The primary structure comprises 89 residues: Small ribosomal subunit protein uS15 (89 aa).

Belongs to the universal ribosomal protein uS15 family. Part of the 30S ribosomal subunit. Forms a bridge to the 50S subunit in the 70S ribosome, contacting the 23S rRNA.

Its function is as follows. One of the primary rRNA binding proteins, it binds directly to 16S rRNA where it helps nucleate assembly of the platform of the 30S subunit by binding and bridging several RNA helices of the 16S rRNA. In terms of biological role, forms an intersubunit bridge (bridge B4) with the 23S rRNA of the 50S subunit in the ribosome. The polypeptide is Small ribosomal subunit protein uS15 (Histophilus somni (strain 129Pt) (Haemophilus somnus)).